The following is an 859-amino-acid chain: DNA mismatch repair protein MutS (859 aa).

Position 617-624 (G617–S624) interacts with ATP. The tract at residues E799 to S821 is disordered.

Belongs to the DNA mismatch repair MutS family.

In terms of biological role, this protein is involved in the repair of mismatches in DNA. It is possible that it carries out the mismatch recognition step. This protein has a weak ATPase activity. This is DNA mismatch repair protein MutS from Pseudomonas savastanoi pv. phaseolicola (strain 1448A / Race 6) (Pseudomonas syringae pv. phaseolicola (strain 1448A / Race 6)).